The chain runs to 480 residues: Alpha-glucosidase (480 aa).

V4 to S70 serves as a coordination point for NAD(+). Substrate-binding residues include D119 and N153. Residue C174 coordinates Mn(2+). Residue H175 is the Proton donor of the active site. H203 is a binding site for Mn(2+). D260 acts as the Proton acceptor in catalysis.

The protein belongs to the glycosyl hydrolase 4 family. Homodimer. It depends on NAD(+) as a cofactor. Requires Mn(2+) as cofactor.

The catalysed reaction is Hydrolysis of terminal, non-reducing (1-&gt;4)-linked alpha-D-glucose residues with release of alpha-D-glucose.. Its activity is regulated as follows. Inhibited by EDTA in vitro. Is able to hydrolyze diverse types of alpha-glycoside bonds in di- and trisaccharides: alpha-1,4 bonds of maltose and maltotriose, alpha-1,1 bonds of trehalose, alpha-1,2 bonds of sucrose, alpha-1,3 bonds of turanose and melizitose, alpha-1,6 bonds of isomaltose and melibiose. AglA is not specific with respect to the configuration at the C-4 position of its substrates because it also possesses alpha-galactosidase activity. Acts on the substrate from the non-reducing end of the chain. The activity of AglA drops with increasing length of the saccharide chain. Does not hydrolyze alpha-, beta-, and gamma-cyclodextrins or polysaccharides (starch, pullulan, amylose, amylopectin, glycogen). Does not cleave beta-glycosidic bonds in di-, oligo-, or polysaccharides. This chain is Alpha-glucosidase (aglA), found in Thermotoga neapolitana.